A 160-amino-acid polypeptide reads, in one-letter code: Nucleotide-binding protein Tgr7_1196 (160 aa).

It belongs to the YajQ family.

Functionally, nucleotide-binding protein. The polypeptide is Nucleotide-binding protein Tgr7_1196 (Thioalkalivibrio sulfidiphilus (strain HL-EbGR7)).